The following is a 356-amino-acid chain: tRNA N6-adenosine threonylcarbamoyltransferase (356 aa).

2 residues coordinate Fe cation: histidine 115 and histidine 119. Residues 138 to 142 (LVSGG), aspartate 171, glycine 184, and asparagine 283 contribute to the substrate site. Aspartate 311 is a Fe cation binding site.

The protein belongs to the KAE1 / TsaD family. The cofactor is Fe(2+).

Its subcellular location is the cytoplasm. It catalyses the reaction L-threonylcarbamoyladenylate + adenosine(37) in tRNA = N(6)-L-threonylcarbamoyladenosine(37) in tRNA + AMP + H(+). In terms of biological role, required for the formation of a threonylcarbamoyl group on adenosine at position 37 (t(6)A37) in tRNAs that read codons beginning with adenine. Is involved in the transfer of the threonylcarbamoyl moiety of threonylcarbamoyl-AMP (TC-AMP) to the N6 group of A37, together with TsaE and TsaB. TsaD likely plays a direct catalytic role in this reaction. This Prochlorococcus marinus (strain MIT 9303) protein is tRNA N6-adenosine threonylcarbamoyltransferase.